The following is a 631-amino-acid chain: Probable potassium transport system protein Kup (631 aa).

12 helical membrane passes run 17–37 (IGLLIAAVGVVYGDIGTSPLY), 56–76 (ILGVLSLIFWSLIWVVSFKYM), 109–129 (MMMVVFGLFGAALFYGDSMIT), 147–167 (GLDHWIVPMALIVLVGLFLIQ), 174–194 (IGVLFGPVMVTWFLVLGALGV), 215–235 (FFIIHPGIGVAILGAVVLALT), 256–276 (WFILVLPALLLNYFGQGALVL), 288–308 (LLAPGWALLPLIGLSTMATII), 346–366 (IYIGAVNWALMAGVILLVIGF), 378–398 (VAVTGTMLCTTILVSTVMLML), 403–423 (PLLAVPLLICLLLVDGLFFAA), and 428–448 (IFQGGAFPVLAGAVLFILMTT).

This sequence belongs to the HAK/KUP transporter (TC 2.A.72) family.

It localises to the cell inner membrane. The catalysed reaction is K(+)(in) + H(+)(in) = K(+)(out) + H(+)(out). Functionally, transport of potassium into the cell. Likely operates as a K(+):H(+) symporter. The sequence is that of Probable potassium transport system protein Kup from Pseudomonas savastanoi pv. phaseolicola (strain 1448A / Race 6) (Pseudomonas syringae pv. phaseolicola (strain 1448A / Race 6)).